The primary structure comprises 287 residues: Rhomboid-like protein 18 (287 aa).

6 consecutive transmembrane segments (helical) span residues 10 to 30 (NAPV…FFGI), 53 to 73 (LIIS…LYLL), 90 to 110 (VFIF…LSLT), 117 to 137 (LLTS…FLDI), 145 to 165 (VLGV…QLLL), and 172 to 192 (IFTG…IFGI). In terms of domain architecture, UBA spans 244–284 (EPSEEAIATLVSMGFDQNAARQALVHARNDVNAATNILLEA).

The protein belongs to the peptidase S54 family.

The protein localises to the membrane. In terms of biological role, probable rhomboid-type serine protease that catalyzes intramembrane proteolysis. This chain is Rhomboid-like protein 18, found in Arabidopsis thaliana (Mouse-ear cress).